We begin with the raw amino-acid sequence, 407 residues long: MEGWRGAWYVPCLASHETLQELCRKENLRCKSIGITNKSLKSYEVEYLCDYKVEEGKEYYLVKWKGWPESSNTWEPQKNLKCPKLLENFLSDKDEYLSRMKEGRALKVRNSVKALKPAVADYIVKKAKQRIALQRWKEELNRKKNHKGMILVENTVDLEGPPIDFYYINEYKPAPGINVINGITTGCECSDCPAEKCCPKEAGFILAYNKQKKLKIQPGLPIYECNSFCRCGPDCPNRIVQKGTQYSLCIFRTNNGRGWGVKTLQKIKTNSFVMEYVGEVITSEEAERRGQFYDNQGNTYLFDLDYDSDEFTVDAARYGNVSHFVNHSCDPNLQVFNVFIDNLDLRLPRIALFSTRTIKAGEELTFDYQMKGSIDLTSDSADGLSSSRKRIRTVCKCGAVCCRGYLN.

The Chromo domain maps to 43–101; it reads YEVEYLCDYKVEEGKEYYLVKWKGWPESSNTWEPQKNLKCPKLLENFLSDKDEYLSRMK. The region spanning 185-243 is the Pre-SET domain; that stretch reads TGCECSDCPAEKCCPKEAGFILAYNKQKKLKIQPGLPIYECNSFCRCGPDCPNRIVQKG. Positions 187, 189, 192, 197, 198, 225, 229, 231, and 235 each coordinate Zn(2+). An SET domain is found at 246-369; sequence YSLCIFRTNN…AGEELTFDYQ (124 aa). S-adenosyl-L-methionine-binding positions include 257–259, Y300, and 326–327; these read RGW and NH. The Zn(2+) site is built by C329, C395, C397, and C402. Residues 391–407 form the Post-SET domain; the sequence is IRTVCKCGAVCCRGYLN.

The protein belongs to the class V-like SAM-binding methyltransferase superfamily. Histone-lysine methyltransferase family. Suvar3-9 subfamily.

The protein resides in the nucleus. The protein localises to the chromosome. It is found in the centromere. The catalysed reaction is L-lysyl(9)-[histone H3] + 3 S-adenosyl-L-methionine = N(6),N(6),N(6)-trimethyl-L-lysyl(9)-[histone H3] + 3 S-adenosyl-L-homocysteine + 3 H(+). In terms of biological role, histone methyltransferase that specifically trimethylates 'Lys-9' of histone H3 using monomethylated H3 'Lys-9' as substrate. H3 'Lys-9' trimethylation represents a specific tag for epigenetic transcriptional repression by recruiting HP1 (CBX1, CBX3 and/or CBX5) proteins to methylated histones. Mainly functions in heterochromatin regions, thereby playing a central role in the establishment of constitutive heterochromatin at pericentric and telomere regions. H3 'Lys-9' trimethylation is also required to direct DNA methylation at pericentric repeats. SUV39H1 is targeted to histone H3 via its interaction with RB1 and is involved in many processes. This is Histone-lysine N-methyltransferase SUV39H2 (SUV39H2) from Gallus gallus (Chicken).